Consider the following 158-residue polypeptide: Urease accessory protein UreE (158 aa).

The segment at 133–158 (PEGGAYQAHSHDGHSHHQGHTHDHHD) is disordered. The segment covering 141 to 158 (HSHDGHSHHQGHTHDHHD) has biased composition (basic and acidic residues).

The protein belongs to the UreE family.

The protein resides in the cytoplasm. Its function is as follows. Involved in urease metallocenter assembly. Binds nickel. Probably functions as a nickel donor during metallocenter assembly. The chain is Urease accessory protein UreE from Chelativorans sp. (strain BNC1).